We begin with the raw amino-acid sequence, 1021 residues long: Probable calcium-transporting ATPase 6, plasma membrane-type (1021 aa).

Topologically, residues 1-155 (MEGGRSWSIE…RSFWMFVWDA (155 aa)) are cytoplasmic. Helical transmembrane passes span 156–176 (LHDLTLIILVVCALVSIVVGL) and 181–201 (WPMGIYDGFGIILSILLVVLV). Over 202–241 (TATSDYQQARKFMELDREKQKIYIRVTRDKKTKEVLVHDL) the chain is Cytoplasmic. 2 helical membrane passes run 242-262 (VVGDILHLSIGDVVPADGLFI) and 338-358 (VATIIGQIGLVFAVLTFLVLL). Topologically, residues 359-384 (ARFLADKGMHVGLLNWSANDALTIVN) are cytoplasmic. Residues 385-405 (YFAIAVTIIVVAVPEGLPLAV) traverse the membrane as a helical segment. Catalysis depends on D441, which acts as the 4-aspartylphosphate intermediate. Mg(2+) contacts are provided by D740 and D744. Residues 807 to 827 (IVALIVNFVSACIIGSAPLTA) form a helical membrane-spanning segment. Residues 828 to 829 (VQ) are Cytoplasmic-facing. 2 helical membrane passes run 830 to 850 (LLWVNMIMDTLGALALATEPP) and 879 to 899 (GLYQLLVLATLMVIGKKLLSI). Over 900 to 942 (EGPQSDKTINTLIFNSFVFCQVFNEINCREMEKINVLQGIFRN) the chain is Cytoplasmic. The next 2 helical transmembrane spans lie at 943–963 (WIFVGILTATVIFQVIIVEFL) and 974–994 (GELWLLSVVIGSISMIISVIL). Topologically, residues 995–1021 (KCIPVEFNKTNTKPHGYELIPEGPEIL) are cytoplasmic.

It belongs to the cation transport ATPase (P-type) (TC 3.A.3) family. Type IIB subfamily.

The protein localises to the membrane. The enzyme catalyses Ca(2+)(in) + ATP + H2O = Ca(2+)(out) + ADP + phosphate + H(+). With respect to regulation, activated by calmodulin. This magnesium-dependent enzyme catalyzes the hydrolysis of ATP coupled with the translocation of calcium from the cytosol out of the cell, into the endoplasmic reticulum, or into organelles. This Oryza sativa subsp. japonica (Rice) protein is Probable calcium-transporting ATPase 6, plasma membrane-type.